The primary structure comprises 369 residues: Putative transport protein YueF (369 aa).

8 helical membrane passes run 13-33, 34-54, 73-93, 159-179, 213-233, 234-254, 271-291, and 316-336; these read ILFV…FQPF, IVFI…YFIF, LIYL…GPII, AVFG…FILF, DTLA…GTAC, FIGY…VMAI, VIVG…VVVI, and IILL…ILAV.

Belongs to the autoinducer-2 exporter (AI-2E) (TC 2.A.86) family.

Its subcellular location is the cell membrane. This Bacillus subtilis (strain 168) protein is Putative transport protein YueF (yueF).